A 329-amino-acid polypeptide reads, in one-letter code: Transcription factor RF2b (329 aa).

Disordered regions lie at residues 1–24 (MQEP…RSEV) and 62–97 (SSGP…DGSG). The 64-residue stretch at 132–195 (DPKRAKRILA…TGLSAENAEL (64 aa)) folds into the bZIP domain. A basic motif region spans residues 134-155 (KRAKRILANRQSAARSKERKAR). The tract at residues 160–174 (LERKVQTLQTEATTL) is leucine-zipper. The segment at 260 to 303 (RQNGGTQLPPQFQPPRPNVPNHMLSHPNGLQDIMQQDPLGRLQG) is disordered.

Belongs to the bZIP family. In terms of assembly, binds DNA as a homodimer or as a heterodimer with RF2a. The heterodimer binds stronger to DNA than the homodimer. As to expression, expressed at high levels in roots, low level in leaf sheath, but not in leaf blade. Predominantly expressed in vascular tissues.

Its subcellular location is the nucleus. Its function is as follows. Transcription factor probably involved in vascular development and shoot tissue organization. Binds to the DNA sequence 5'-CCGAGTGTGCCCCTGG-3' present in the promoter region Box II of the phloem-specific rice tungro bacilliform virus (RTBV) promoter. May regulate tissue-specific expression of the RTBV promoter and virus replication. This chain is Transcription factor RF2b (RF2b), found in Oryza sativa subsp. japonica (Rice).